We begin with the raw amino-acid sequence, 475 residues long: Ribulose bisphosphate carboxylase large chain (475 aa).

The propeptide occupies 1 to 2; that stretch reads MS. N-acetylproline is present on proline 3. Lysine 14 is modified (N6,N6,N6-trimethyllysine). Residues asparagine 123 and threonine 173 each contribute to the substrate site. Residue lysine 175 is the Proton acceptor of the active site. Residue lysine 177 participates in substrate binding. Residues lysine 201, aspartate 203, and glutamate 204 each coordinate Mg(2+). An N6-carboxylysine modification is found at lysine 201. Histidine 294 (proton acceptor) is an active-site residue. Residues arginine 295, histidine 327, and serine 379 each contribute to the substrate site.

The protein belongs to the RuBisCO large chain family. Type I subfamily. As to quaternary structure, heterohexadecamer of 8 large chains and 8 small chains; disulfide-linked. The disulfide link is formed within the large subunit homodimers. Mg(2+) serves as cofactor. The disulfide bond which can form in the large chain dimeric partners within the hexadecamer appears to be associated with oxidative stress and protein turnover.

The protein resides in the plastid. The protein localises to the chloroplast. The enzyme catalyses 2 (2R)-3-phosphoglycerate + 2 H(+) = D-ribulose 1,5-bisphosphate + CO2 + H2O. It carries out the reaction D-ribulose 1,5-bisphosphate + O2 = 2-phosphoglycolate + (2R)-3-phosphoglycerate + 2 H(+). Functionally, ruBisCO catalyzes two reactions: the carboxylation of D-ribulose 1,5-bisphosphate, the primary event in carbon dioxide fixation, as well as the oxidative fragmentation of the pentose substrate in the photorespiration process. Both reactions occur simultaneously and in competition at the same active site. The sequence is that of Ribulose bisphosphate carboxylase large chain from Angiopteris lygodiifolia (Turnip fern).